The following is a 938-amino-acid chain: Breast cancer type 2 susceptibility protein homolog (938 aa).

Basic and acidic residues-rich tracts occupy residues 320-339 and 409-425; these read LEPS…ESKI and NSIK…ETPN. Disordered stretches follow at residues 320–359 and 409–434; these read LEPS…TTVL and NSIK…SSHQ. BRCA2 repeat units lie at residues 537 to 571, 638 to 672, and 713 to 747; these read AEPE…EFQY, NEPQ…QSRA, and SETE…EFQA. Polar residues predominate over residues 870–879; that stretch reads SSTETSTSCA. The segment at 870–938 is disordered; the sequence is SSTETSTSCA…RRLGLSRSRY (69 aa). Residues 898 to 915 show a composition bias toward basic and acidic residues; it reads ADRDLNRSKDCAKNRQDA. Over residues 926-938 the composition is skewed to basic residues; it reads KKSRRLGLSRSRY.

Interacts with Rad9 and spn-A/Rad51.

Its subcellular location is the nucleus. Involved in and required for double-strand break repair by meiotic and mitotic homologous recombination. During meiosis, has a dual role in the repair of meiotic double-stranded breaks and the efficient activation of the meiotic recombination checkpoint. The chain is Breast cancer type 2 susceptibility protein homolog from Drosophila sechellia (Fruit fly).